A 354-amino-acid polypeptide reads, in one-letter code: Phospho-N-acetylmuramoyl-pentapeptide-transferase (354 aa).

10 consecutive transmembrane segments (helical) span residues 16–36, 66–86, 88–108, 130–150, 168–188, 193–213, 227–247, 257–277, 282–302, and 331–351; these read YITV…LYLM, TPTM…LLTV, IHNP…AIGV, FFLQ…YAHL, IFGI…VNLT, GLAT…TYIT, IIGV…LIGF, VFMG…MAII, VLLI…IIQV, and KIIV…LITL.

It belongs to the glycosyltransferase 4 family. MraY subfamily. Requires Mg(2+) as cofactor.

Its subcellular location is the cell inner membrane. The enzyme catalyses UDP-N-acetyl-alpha-D-muramoyl-L-alanyl-gamma-D-glutamyl-meso-2,6-diaminopimeloyl-D-alanyl-D-alanine + di-trans,octa-cis-undecaprenyl phosphate = di-trans,octa-cis-undecaprenyl diphospho-N-acetyl-alpha-D-muramoyl-L-alanyl-D-glutamyl-meso-2,6-diaminopimeloyl-D-alanyl-D-alanine + UMP. The protein operates within cell wall biogenesis; peptidoglycan biosynthesis. Its function is as follows. Catalyzes the initial step of the lipid cycle reactions in the biosynthesis of the cell wall peptidoglycan: transfers peptidoglycan precursor phospho-MurNAc-pentapeptide from UDP-MurNAc-pentapeptide onto the lipid carrier undecaprenyl phosphate, yielding undecaprenyl-pyrophosphoryl-MurNAc-pentapeptide, known as lipid I. This Nitratiruptor sp. (strain SB155-2) protein is Phospho-N-acetylmuramoyl-pentapeptide-transferase.